The chain runs to 548 residues: Chaperonin GroEL (548 aa).

Residues 29–32, Lys50, 86–90, Gly414, 478–480, and Asp494 contribute to the ATP site; these read TLGP, DGTTT, and NAA.

The protein belongs to the chaperonin (HSP60) family. As to quaternary structure, forms a cylinder of 14 subunits composed of two heptameric rings stacked back-to-back. Interacts with the co-chaperonin GroES.

Its subcellular location is the cytoplasm. It catalyses the reaction ATP + H2O + a folded polypeptide = ADP + phosphate + an unfolded polypeptide.. Functionally, together with its co-chaperonin GroES, plays an essential role in assisting protein folding. The GroEL-GroES system forms a nano-cage that allows encapsulation of the non-native substrate proteins and provides a physical environment optimized to promote and accelerate protein folding. The sequence is that of Chaperonin GroEL from Alcanivorax borkumensis (strain ATCC 700651 / DSM 11573 / NCIMB 13689 / SK2).